A 254-amino-acid polypeptide reads, in one-letter code: Autophagy-related protein 5 (254 aa).

Lys102 is covalently cross-linked (Glycyl lysine isopeptide (Lys-Gly) (interchain with G-Cter in ATG12)).

The protein belongs to the ATG5 family. As to quaternary structure, conjugated with ATG12. The ATG5-ATG12 conjugate forms a complex with several units of ATG16. The ATG12-ATG5 conjugate also associates with ATG3. Conjugated to ATG12; which is essential for autophagy. Conjugation with ATG12 involves ATG7 as an E1-like activating enzyme and ATG10 as an E2-like conjugating enzyme.

The protein localises to the preautophagosomal structure membrane. In terms of biological role, involved in cytoplasm to vacuole transport (Cvt) and autophagic vesicle formation. Autophagy is essential for maintenance of amino acid levels and protein synthesis under nitrogen starvation. Required for selective autophagic degradation of the nucleus (nucleophagy). Also required for mitophagy, which eliminates defective or superfluous mitochondria in order to fulfill cellular energy requirements and prevent excess ROS production. Conjugation with ATG12, through a ubiquitin-like conjugating system involving ATG7 as an E1-like activating enzyme and ATG10 as an E2-like conjugating enzyme, is essential for its function. The ATG12-ATG5 conjugate acts as an E3-like enzyme which is required for lipidation of ATG8 and ATG8 association to the vesicle membranes. ATG12-ATG5 rearranges the ATG3 catalytic center and enhances its E2 activity. Autophagy is required for proper vegetative growth, asexual/sexual reproduction, and full virulence. Autophagy is particularly involved in the biosynthesis of deoxynivalenol (DON), an important virulence determinant. The polypeptide is Autophagy-related protein 5 (Gibberella zeae (strain ATCC MYA-4620 / CBS 123657 / FGSC 9075 / NRRL 31084 / PH-1) (Wheat head blight fungus)).